Here is a 705-residue protein sequence, read N- to C-terminus: Phosphoribosylformylglycinamidine synthase subunit PurL (705 aa).

His32 is a catalytic residue. ATP is bound at residue Tyr35. Residue Glu76 coordinates Mg(2+). Substrate contacts are provided by residues 77-80 (SHNH) and Arg99. His78 acts as the Proton acceptor in catalysis. Mg(2+) is bound at residue Asp100. Gln224 contacts substrate. Asp252 is a Mg(2+) binding site. Substrate is bound at residue 296-298 (ESQ). ATP contacts are provided by Asp471 and Gly508. Asn509 is a Mg(2+) binding site. Residue Ser511 participates in substrate binding.

The protein belongs to the FGAMS family. In terms of assembly, monomer. Part of the FGAM synthase complex composed of 1 PurL, 1 PurQ and 2 PurS subunits.

The protein resides in the cytoplasm. The enzyme catalyses N(2)-formyl-N(1)-(5-phospho-beta-D-ribosyl)glycinamide + L-glutamine + ATP + H2O = 2-formamido-N(1)-(5-O-phospho-beta-D-ribosyl)acetamidine + L-glutamate + ADP + phosphate + H(+). It functions in the pathway purine metabolism; IMP biosynthesis via de novo pathway; 5-amino-1-(5-phospho-D-ribosyl)imidazole from N(2)-formyl-N(1)-(5-phospho-D-ribosyl)glycinamide: step 1/2. In terms of biological role, part of the phosphoribosylformylglycinamidine synthase complex involved in the purines biosynthetic pathway. Catalyzes the ATP-dependent conversion of formylglycinamide ribonucleotide (FGAR) and glutamine to yield formylglycinamidine ribonucleotide (FGAM) and glutamate. The FGAM synthase complex is composed of three subunits. PurQ produces an ammonia molecule by converting glutamine to glutamate. PurL transfers the ammonia molecule to FGAR to form FGAM in an ATP-dependent manner. PurS interacts with PurQ and PurL and is thought to assist in the transfer of the ammonia molecule from PurQ to PurL. This Pyrococcus abyssi (strain GE5 / Orsay) protein is Phosphoribosylformylglycinamidine synthase subunit PurL.